Here is a 354-residue protein sequence, read N- to C-terminus: Uroporphyrinogen decarboxylase (354 aa).

Residues 27–31 (RQAGR), D77, Y154, S209, and H327 each bind substrate.

This sequence belongs to the uroporphyrinogen decarboxylase family. Homodimer.

The protein resides in the cytoplasm. The enzyme catalyses uroporphyrinogen III + 4 H(+) = coproporphyrinogen III + 4 CO2. It participates in porphyrin-containing compound metabolism; protoporphyrin-IX biosynthesis; coproporphyrinogen-III from 5-aminolevulinate: step 4/4. In terms of biological role, catalyzes the decarboxylation of four acetate groups of uroporphyrinogen-III to yield coproporphyrinogen-III. In Shewanella baltica (strain OS185), this protein is Uroporphyrinogen decarboxylase.